The primary structure comprises 525 residues: GMP synthase [glutamine-hydrolyzing] (525 aa).

In terms of domain architecture, Glutamine amidotransferase type-1 spans 9-207 (RILILDFGSQ…VLGICGCEAL (199 aa)). Cys-86 acts as the Nucleophile in catalysis. Residues His-181 and Glu-183 contribute to the active site. The GMPS ATP-PPase domain occupies 208–400 (WTSATIIEDA…LGLPYDMLYR (193 aa)). Residue 235–241 (SGGVDSS) participates in ATP binding.

In terms of assembly, homodimer.

The catalysed reaction is XMP + L-glutamine + ATP + H2O = GMP + L-glutamate + AMP + diphosphate + 2 H(+). The protein operates within purine metabolism; GMP biosynthesis; GMP from XMP (L-Gln route): step 1/1. Functionally, catalyzes the synthesis of GMP from XMP. The protein is GMP synthase [glutamine-hydrolyzing] of Yersinia pestis bv. Antiqua (strain Antiqua).